Here is a 344-residue protein sequence, read N- to C-terminus: BURP domain-containing protein 16 (344 aa).

The signal sequence occupies residues 1–25 (MATSFLFSLILLLITALSLPFPLHA). Residues Asn-90, Asn-120, Asn-181, and Asn-333 are each glycosylated (N-linked (GlcNAc...) asparagine). Positions 128–341 (FFREQELKEG…FNGSMTWVIA (214 aa)) constitute a BURP domain.

As to expression, expressed in roots, stems, leaves and panicles.

This is BURP domain-containing protein 16 (BURP16) from Oryza sativa subsp. japonica (Rice).